A 551-amino-acid chain; its full sequence is Dihydroxy-acid dehydratase (551 aa).

A [2Fe-2S] cluster-binding site is contributed by cysteine 52. A Mg(2+)-binding site is contributed by aspartate 84. Cysteine 125 provides a ligand contact to [2Fe-2S] cluster. Residues aspartate 126 and lysine 127 each coordinate Mg(2+). Residue lysine 127 is modified to N6-carboxylysine. Residue cysteine 197 participates in [2Fe-2S] cluster binding. Position 448 (glutamate 448) interacts with Mg(2+). Serine 474 serves as the catalytic Proton acceptor.

Belongs to the IlvD/Edd family. As to quaternary structure, homodimer. The cofactor is [2Fe-2S] cluster. Requires Mg(2+) as cofactor.

The enzyme catalyses (2R)-2,3-dihydroxy-3-methylbutanoate = 3-methyl-2-oxobutanoate + H2O. It catalyses the reaction (2R,3R)-2,3-dihydroxy-3-methylpentanoate = (S)-3-methyl-2-oxopentanoate + H2O. The protein operates within amino-acid biosynthesis; L-isoleucine biosynthesis; L-isoleucine from 2-oxobutanoate: step 3/4. Its pathway is amino-acid biosynthesis; L-valine biosynthesis; L-valine from pyruvate: step 3/4. In terms of biological role, functions in the biosynthesis of branched-chain amino acids. Catalyzes the dehydration of (2R,3R)-2,3-dihydroxy-3-methylpentanoate (2,3-dihydroxy-3-methylvalerate) into 2-oxo-3-methylpentanoate (2-oxo-3-methylvalerate) and of (2R)-2,3-dihydroxy-3-methylbutanoate (2,3-dihydroxyisovalerate) into 2-oxo-3-methylbutanoate (2-oxoisovalerate), the penultimate precursor to L-isoleucine and L-valine, respectively. The protein is Dihydroxy-acid dehydratase of Francisella tularensis subsp. tularensis (strain FSC 198).